Here is a 147-residue protein sequence, read N- to C-terminus: Small ribosomal subunit protein uS12 (147 aa).

The protein belongs to the universal ribosomal protein uS12 family. As to quaternary structure, part of the 30S ribosomal subunit.

In terms of biological role, with S4 and S5 plays an important role in translational accuracy. Located at the interface of the 30S and 50S subunits. This chain is Small ribosomal subunit protein uS12, found in Thermococcus kodakarensis (strain ATCC BAA-918 / JCM 12380 / KOD1) (Pyrococcus kodakaraensis (strain KOD1)).